Reading from the N-terminus, the 403-residue chain is MKLNNLPSEFQEALPILEKIKAAGFEAYFVGGSVRDAILGRPIHDVDIATSSYPQETKQIFSRTIDVGIEHGTVLVLEGKKEYEITTFRTEEEYVDFRRPSQVSFVRSLEEDLKRRDFTVNAFALDEEAQIVDLFDGMTDLENRTLRAVGIPAERFNEDALRIMRGFRFAATLDFEIEPTTFEAMVQTAPLLEKISVERSFIEFDKLLMADFWRKGLRAMIDSKAYNFLPDLAGKSDELEAMLTSLTEEFRFSTSEQAWALLFVCLGIDNIKSFLKKWKTSNDFQRSVVKLVEIYQLRQAGPVTKQICFKYGKEFLYLVEELHQAQGFVTDFAAIDKIDQALTIHDKHEIVVNGGHLMKAFDLKPGPVLGELLKEVEFQIVEGQLENEEQAIMTFVKGILENE.

The ATP site is built by Gly-32 and Arg-35. CTP contacts are provided by Gly-32 and Arg-35. Positions 45 and 47 each coordinate Mg(2+). The ATP site is built by Arg-116, Asp-159, Arg-162, Arg-165, and Arg-168. CTP contacts are provided by Arg-116, Asp-159, Arg-162, Arg-165, and Arg-168.

The protein belongs to the tRNA nucleotidyltransferase/poly(A) polymerase family. Bacterial CCA-adding enzyme type 3 subfamily. In terms of assembly, homodimer. Requires Mg(2+) as cofactor.

The catalysed reaction is a tRNA precursor + 2 CTP + ATP = a tRNA with a 3' CCA end + 3 diphosphate. It catalyses the reaction a tRNA with a 3' CCA end + 2 CTP + ATP = a tRNA with a 3' CCACCA end + 3 diphosphate. Catalyzes the addition and repair of the essential 3'-terminal CCA sequence in tRNAs without using a nucleic acid template. Adds these three nucleotides in the order of C, C, and A to the tRNA nucleotide-73, using CTP and ATP as substrates and producing inorganic pyrophosphate. tRNA 3'-terminal CCA addition is required both for tRNA processing and repair. Also involved in tRNA surveillance by mediating tandem CCA addition to generate a CCACCA at the 3' terminus of unstable tRNAs. While stable tRNAs receive only 3'-terminal CCA, unstable tRNAs are marked with CCACCA and rapidly degraded. This is CCA-adding enzyme from Streptococcus suis (strain 98HAH33).